The primary structure comprises 566 residues: Proline--tRNA ligase (566 aa).

Belongs to the class-II aminoacyl-tRNA synthetase family. ProS type 1 subfamily. As to quaternary structure, homodimer.

The protein resides in the cytoplasm. The catalysed reaction is tRNA(Pro) + L-proline + ATP = L-prolyl-tRNA(Pro) + AMP + diphosphate. In terms of biological role, catalyzes the attachment of proline to tRNA(Pro) in a two-step reaction: proline is first activated by ATP to form Pro-AMP and then transferred to the acceptor end of tRNA(Pro). As ProRS can inadvertently accommodate and process non-cognate amino acids such as alanine and cysteine, to avoid such errors it has two additional distinct editing activities against alanine. One activity is designated as 'pretransfer' editing and involves the tRNA(Pro)-independent hydrolysis of activated Ala-AMP. The other activity is designated 'posttransfer' editing and involves deacylation of mischarged Ala-tRNA(Pro). The misacylated Cys-tRNA(Pro) is not edited by ProRS. This chain is Proline--tRNA ligase, found in Bacillus cereus (strain Q1).